Consider the following 93-residue polypeptide: UPF0473 protein CHY_0543 (93 aa).

Belongs to the UPF0473 family.

This is UPF0473 protein CHY_0543 from Carboxydothermus hydrogenoformans (strain ATCC BAA-161 / DSM 6008 / Z-2901).